The following is a 330-amino-acid chain: Probable ADP,ATP carrier protein At5g56450 (330 aa).

Over residues 1–10 (MCISKEDEED) the composition is skewed to acidic residues. The segment at 1–22 (MCISKEDEEDPSRNRRNQSPLS) is disordered. 6 consecutive transmembrane segments (helical) span residues 27–61 (LKHF…LQTQ), 103–127 (GSSV…RSIL), 137–171 (IFSG…RLAA), 203–230 (GLPA…EIFS), 236–270 (ELAL…IMMQ), and 300–325 (GALS…KRFL). 3 Solcar repeats span residues 28-126 (KHFQ…YRSI), 139-228 (SGAL…VKEI), and 241-324 (KRWG…VKRF). ADP is bound by residues Arg108 and Lys120. Residue Arg264 coordinates ADP. The Substrate recognition motif lies at 264–269 (RRRIMM).

It belongs to the mitochondrial carrier (TC 2.A.29) family. Monomer.

It localises to the membrane. It carries out the reaction ADP(in) + ATP(out) = ADP(out) + ATP(in). Its function is as follows. ADP:ATP antiporter that catalyzes the exchange of ADP and ATP across the membrane. The sequence is that of Probable ADP,ATP carrier protein At5g56450 from Arabidopsis thaliana (Mouse-ear cress).